We begin with the raw amino-acid sequence, 1221 residues long: Putative DNA-directed RNA polymerase II subunit RPB2 homolog (1221 aa).

Composition is skewed to low complexity over residues 1–54 (MSRG…SASS) and 692–701 (PAPSSSPSDS). Disordered regions lie at residues 1–63 (MSRG…PMSE) and 673–701 (RGSG…PSDS). Residue aspartate 823 participates in Mg(2+) binding. 4 residues coordinate Zn(2+): cysteine 1174, cysteine 1177, cysteine 1187, and cysteine 1190. The C4-type zinc finger occupies 1174 to 1190 (CKECGRISDHFEYCRMC).

Belongs to the RNA polymerase beta chain family.

The enzyme catalyses RNA(n) + a ribonucleoside 5'-triphosphate = RNA(n+1) + diphosphate. Its function is as follows. Component of the DNA-dependent RNA polymerase that catalyzes the transcription of DNA into RNA using the four ribonucleoside triphosphates as substrates. Second largest component of RNA polymerase II which synthesizes mRNA precursors and many functional non-coding RNAs. Proposed to contribute to the polymerase catalytic activity and forms the polymerase active center together with the largest subunit. The sequence is that of Putative DNA-directed RNA polymerase II subunit RPB2 homolog from Dryophytes versicolor (chameleon treefrog).